Reading from the N-terminus, the 123-residue chain is Large ribosomal subunit protein mL52 (123 aa).

The N-terminal 23 residues, 1–23 (MAALGTVLFTGVRRLHCSVAAWA), are a transit peptide targeting the mitochondrion. Residues 99-109 (QEEQRKQENAL) are compositionally biased toward basic and acidic residues. The segment at 99–123 (QEEQRKQENALKPKGASLKSPLPSQ) is disordered.

The protein belongs to the mitochondrion-specific ribosomal protein mL52 family. In terms of assembly, component of the mitochondrial large ribosomal subunit (mt-LSU). Mature mammalian 55S mitochondrial ribosomes consist of a small (28S) and a large (39S) subunit. The 28S small subunit contains a 12S ribosomal RNA (12S mt-rRNA) and 30 different proteins. The 39S large subunit contains a 16S rRNA (16S mt-rRNA), a copy of mitochondrial valine transfer RNA (mt-tRNA(Val)), which plays an integral structural role, and 52 different proteins. mL52 connects the central protuberance to the body of the ribosome.

The protein resides in the mitochondrion. The protein is Large ribosomal subunit protein mL52 (MRPL52) of Homo sapiens (Human).